The chain runs to 53 residues: ATP synthase protein 8 (53 aa).

A helical transmembrane segment spans residues 4-24 (MAPISWLLLFIIFSITFILFC).

This sequence belongs to the ATPase protein 8 family. In terms of assembly, F-type ATPases have 2 components, CF(1) - the catalytic core - and CF(0) - the membrane proton channel.

It is found in the mitochondrion membrane. Mitochondrial membrane ATP synthase (F(1)F(0) ATP synthase or Complex V) produces ATP from ADP in the presence of a proton gradient across the membrane which is generated by electron transport complexes of the respiratory chain. F-type ATPases consist of two structural domains, F(1) - containing the extramembraneous catalytic core and F(0) - containing the membrane proton channel, linked together by a central stalk and a peripheral stalk. During catalysis, ATP synthesis in the catalytic domain of F(1) is coupled via a rotary mechanism of the central stalk subunits to proton translocation. Part of the complex F(0) domain. Minor subunit located with subunit a in the membrane. In Drosophila sechellia (Fruit fly), this protein is ATP synthase protein 8 (mt:ATPase8).